Consider the following 218-residue polypeptide: MPMTLGYWDIRGLAHAIRLLLEYTDSSYEEKKYTMGDAPDYDRSQWLNEKFKLGLDFPNLPYLIDGTHKITQSNAILRYIARKHNLCGETEEEKIRVDILENQAMDVSNQLARVCYSPDFEKLKPEYLEGLPTMMQHFSQFLGKRPWFVGDKITFVDFLAYDVLDLHRIFEPKCLDAFPNLKDFISHFEGLEKISAYMKSSRFLPKPLYTRVAVWGNK.

Residues 2 to 88 enclose the GST N-terminal domain; that stretch reads PMTLGYWDIR…YIARKHNLCG (87 aa). 7–8 is a binding site for glutathione; sequence YW. Position 34 is a phosphothreonine (T34). Residues 43–46, K50, 59–60, and 72–73 each bind glutathione; these read RSQW, NL, and QS. In terms of domain architecture, GST C-terminal spans 90 to 208; it reads TEEEKIRVDI…KSSRFLPKPL (119 aa). Y116 provides a ligand contact to substrate.

The protein belongs to the GST superfamily. Mu family. In terms of assembly, homodimer.

The protein resides in the cytoplasm. It carries out the reaction RX + glutathione = an S-substituted glutathione + a halide anion + H(+). It catalyses the reaction prostaglandin A2 + glutathione = prostaglandin A2-S-(R)-glutathione. The enzyme catalyses prostaglandin J2 + glutathione = prostaglandin J2-S-(R)-glutathione. The catalysed reaction is prostaglandin J2 + glutathione = prostaglandin J2-S-(S)-glutathione. It carries out the reaction prostaglandin A2 + glutathione = prostaglandin A2-S-(S)-glutathione. It catalyses the reaction 11(S)-hydroxy-14(S),15(S)-epoxy-(5Z,8Z,12E)-eicosatrienoate + glutathione = (11S,15S)-dihydroxy-14(R)-S-glutathionyl-(5Z,8Z,12E)-eicosatrienoate. In terms of biological role, conjugation of reduced glutathione to a wide number of exogenous and endogenous hydrophobic electrophiles. Involved in the formation of glutathione conjugates of both prostaglandin A2 (PGA2) and prostaglandin J2 (PGJ2). Participates in the formation of novel hepoxilin regioisomers. The polypeptide is Glutathione S-transferase Mu 1 (GSTM1) (Macaca fascicularis (Crab-eating macaque)).